Consider the following 282-residue polypeptide: Elongation factor Ts (282 aa).

Residues 80–83 (TDFV) form an involved in Mg(2+) ion dislocation from EF-Tu region.

The protein belongs to the EF-Ts family.

The protein resides in the cytoplasm. In terms of biological role, associates with the EF-Tu.GDP complex and induces the exchange of GDP to GTP. It remains bound to the aminoacyl-tRNA.EF-Tu.GTP complex up to the GTP hydrolysis stage on the ribosome. In Chlamydia caviae (strain ATCC VR-813 / DSM 19441 / 03DC25 / GPIC) (Chlamydophila caviae), this protein is Elongation factor Ts.